Reading from the N-terminus, the 450-residue chain is Sensor histidine kinase EnvZ (450 aa).

2 helical membrane-spanning segments follow: residues 15 to 35 (TLLLIVTLLFVSLVTTYLVVL) and 159 to 179 (PLFRYTLAIMLLAIGGAWLFI). Positions 180 to 232 (RIQNRPLVDLEHAALQVGKGIIPPPLREYGASEVRSVTRAFNHMAAGVKQLAD) constitute an HAMP domain. The interval 223–289 (MAAGVKQLAD…IIEQFIDYLR (67 aa)) is cytoplasmic dimerization domain (CDD), when dimerized forms osmosensitive core. Residues 240–440 (GVSHDLRTPL…SIRAWLPVPV (201 aa)) enclose the Histidine kinase domain. Residues histidine 243, 347 to 351 (NAARY), aspartate 373, 392 to 393 (RG), and 402 to 406 (TGLGL) contribute to the ATP site. At histidine 243 the chain carries Phosphohistidine; by autocatalysis.

In terms of assembly, homodimer. Autophosphorylated.

Its subcellular location is the cell inner membrane. It catalyses the reaction ATP + protein L-histidine = ADP + protein N-phospho-L-histidine.. In terms of biological role, member of the two-component regulatory system EnvZ/OmpR involved in osmoregulation (particularly of genes ompF and ompC) as well as other genes. EnvZ functions as a membrane-associated protein kinase that phosphorylates OmpR in response to environmental signals; at low osmolarity OmpR activates ompF transcription, while at high osmolarity it represses ompF and activates ompC transcription. The polypeptide is Sensor histidine kinase EnvZ (envZ) (Salmonella typhimurium (strain SL1344)).